The following is a 484-amino-acid chain: Ankyrin repeat protein T5 (484 aa).

ANK repeat units lie at residues 33 to 64 (MDDT…DVNG), 68 to 102 (TRTS…DVNA), 106 to 138 (DGRY…LVCV), 142 to 173 (DGCG…SIHD), 178 to 211 (YGFN…NSSQ), 251 to 280 (LDFT…NPNV), and 284 to 313 (LGNS…TPDA).

In Rabbit fibroma virus (strain Kasza) (RFV), this protein is Ankyrin repeat protein T5.